The primary structure comprises 154 residues: MAARLCCQLDPARDVLCLRPVGAESRGRPVSGPLGSLSSSSPSAVPTDHGAHLSLRGLPVCAFSSAGPCALRFTSARRMETTVNAHQILPKILHKRTLGLSTMSTTDLEAYFKDCLFKDWEELGEEIRLKVFVLGGCRHKLVCAPAPCNFFTSA.

Residues 26 to 45 (RGRPVSGPLGSLSSSSPSAV) are disordered. Low complexity predominate over residues 31 to 43 (SGPLGSLSSSSPS). Positions 68 to 117 (PCALRFTSARRMETTVNAHQILPKILHKRTLGLSTMSTTDLEAYFKDCLF) are mitochondrial targeting sequence.

It belongs to the orthohepadnavirus protein X family. As to quaternary structure, may form homodimer. May interact with host CEBPA, CFLAR, CREB1, DDB1, E4F1, HBXIP, HSPD1/HSP60, NFKBIA, POLR2E and SMAD4. Interacts with host SMC5-SMC6 complex and induces its degradation. Interacts with host TRPC4AP; leading to prevent ubiquitination of TRPC4AP. Interacts with host PLSCR1; this interaction promotes ubiquitination and degradation of HBx and impairs HBx-mediated cell proliferation. Post-translationally, a fraction may be phosphorylated in insect cells and HepG2 cells, a human hepatoblastoma cell line. Phosphorylated in vitro by host protein kinase C or mitogen-activated protein kinase. N-acetylated in insect cells.

Its subcellular location is the host cytoplasm. The protein resides in the host nucleus. It localises to the host mitochondrion. Functionally, multifunctional protein that plays a role in silencing host antiviral defenses and promoting viral transcription. Does not seem to be essential for HBV infection. May be directly involved in development of cirrhosis and liver cancer (hepatocellular carcinoma). Most of cytosolic activities involve modulation of cytosolic calcium. The effect on apoptosis is controversial depending on the cell types in which the studies have been conducted. May induce apoptosis by localizing in mitochondria and causing loss of mitochondrial membrane potential. May also modulate apoptosis by binding host CFLAR, a key regulator of the death-inducing signaling complex (DISC). Promotes viral transcription by using the host E3 ubiquitin ligase DDB1 to target the SMC5-SMC6 complex to proteasomal degradation. This host complex would otherwise bind to viral episomal DNA, and prevents its transcription. Moderately stimulates transcription of many different viral and cellular transcription elements. Promoters and enhancers stimulated by HBx contain DNA binding sites for NF-kappa-B, AP-1, AP-2, c-EBP, ATF/CREB, or the calcium-activated factor NF-AT. The protein is Protein X of Hepatitis B virus genotype D subtype ayw (isolate Japan/JYW796/1988) (HBV-D).